The primary structure comprises 160 residues: MNILLSIAITTGILSGIWGWGAVSLGLLSWAGFLGCTAYFACPQGGFKGLLISACTLLSGMVWALVIIHGSALAPHLEIVSYVLTGIVAFLMCIQAKQLLLSFVPGTFIGACATFAGQGDWRLVLPSLALGLIFGYAMKNSGLWLASRREQHSANTAVTK.

Helical transmembrane passes span 20–42 (WGAV…YFAC), 50–70 (LLIS…IIHG), 72–92 (ALAP…AFLM), 99–119 (LLLS…AGQG), and 123–143 (LVLP…NSGL).

This sequence to E.coli YahC.

It is found in the cell inner membrane. In Salmonella typhimurium (strain LT2 / SGSC1412 / ATCC 700720), this protein is Inner membrane protein YcdZ (ycdZ).